Here is a 180-residue protein sequence, read N- to C-terminus: Large ribosomal subunit protein uL16 (180 aa).

It belongs to the universal ribosomal protein uL16 family.

This is Large ribosomal subunit protein uL16 from Pyrobaculum aerophilum (strain ATCC 51768 / DSM 7523 / JCM 9630 / CIP 104966 / NBRC 100827 / IM2).